A 460-amino-acid polypeptide reads, in one-letter code: Orexin receptor type 2 (460 aa).

The Extracellular portion of the chain corresponds to 1 to 54; sequence MSSTKLEDSLSRRNWSSASELNETQEPFLNPTDYDDEEFLRYLWREYLHPKEYE. 2 N-linked (GlcNAc...) asparagine glycosylation sites follow: asparagine 14 and asparagine 22. The segment at 33–49 is required for response to orexin-A; that stretch reads DYDDEEFLRYLWREYLH. The helical transmembrane segment at 55–75 threads the bilayer; the sequence is WVLIAGYIIVFVVALIGNVLV. The Cytoplasmic portion of the chain corresponds to 76-88; it reads CVAVWKNHHMRTV. Residues 89–110 form a helical membrane-spanning segment; that stretch reads TNYFIVNLSLADVLVTITCLPA. Topologically, residues 111-127 are extracellular; sequence TLVVDITETWFFGQSLC. Cysteine 127 and cysteine 210 are disulfide-bonded. Residues 128 to 150 form a helical membrane-spanning segment; sequence KVIPYLQTVSVSVSVLTLSCIAL. Residues 151 to 170 are Cytoplasmic-facing; that stretch reads DRWYAICHPLMFKSTAKRAR. Residues 171–191 traverse the membrane as a helical segment; it reads NSIVVIWIVSCIIMIPQAIVM. Topologically, residues 192 to 222 are extracellular; it reads ECSSMLPGLANKTTLFTVCDEHWGGEVYPKM. Residue asparagine 202 is glycosylated (N-linked (GlcNAc...) asparagine). The chain crosses the membrane as a helical span at residues 223-243; the sequence is YHICFFLVTYMAPLCLMILAY. Topologically, residues 244 to 304 are cytoplasmic; the sequence is LQIFRKLWCR…QIRARRKTAR (61 aa). Residues 305–326 form a helical membrane-spanning segment; it reads MLMVVLLVFAICYLPISILNVL. Residues 327-342 are Extracellular-facing; it reads KRVFGMFTHTEDRETV. A helical membrane pass occupies residues 343 to 366; the sequence is YAWFTFSHWLVYANSAANPIIYNF. The Cytoplasmic portion of the chain corresponds to 367-460; the sequence is LSGKFREEFK…SSLLSTWLEV (94 aa).

Belongs to the G-protein coupled receptor 1 family. In terms of tissue distribution, widely expressed. Isoform 2 not detected in skeletal muscle and kidney.

Its subcellular location is the cell membrane. Functionally, nonselective, high-affinity receptor for both orexin-A and orexin-B neuropeptides. Triggers an increase in cytoplasmic Ca(2+) levels in response to orexin-A binding. The chain is Orexin receptor type 2 (Hcrtr2) from Mus musculus (Mouse).